A 3469-amino-acid polypeptide reads, in one-letter code: MATRRVGRGCWEVSPTERRPCAGLRGPAAEEEAASPPVLFLSHFCRSPFLCFGDVRLGTSRTLPLTLDNPNEEVAEVEISHLPAADLGFSVSQRRFVLQPKEKIVISVNWTPFKEGRVRETMTFLVNDVLKHQAILLGNAEEQKKKKRNLWDTIKKKKISASTSHNRRVSNIQNVKTFSVSQKVDRVRSPLHACENLAMNEGGPPTENNHLTLEENKILISPISPAFSECHGATCLPLSVRRSTAYSSLHALENRELLNVDSANVSKDNFNEKVVSETSFNSINVSDQSGENNKLILTPNYSSTLNITQSQRNFLSPDSFVNNSHGENNELELGTCLSSDMFMKDNPKPMLLESTTAREMYQKILSPDSFIKDNYGLNQNLESESVXSILSPNQMACMCTSQQTYKVPSSNENSQVPQSLQDWRKSKVFPCVPECQGSKSPKATFEELVEMKSNCCSFIKQNQPKFPAVKDISSHSHNKQPKRRPILSATVTKRKPTRTRENQTEINKPKAKRCLNSAVGENEKIINNQKEKEDFYSYLPIIDPVLSKSKSYKNEITPSLTTASVARKRKSDGSMGDANERVAVTEHTEVQEIKRIHFSPSEPKTATVKKTKNVITPISKCVSNREKLSLKKKTEFKTPIFKTSKRTKPIIAVAQSNLTFIKSLKTDIPRHPMPFAAKNMFYDERWKEKQEQGFTWWLNFILTPDDFTVKTNISEVNAATLLLGVENQHKISVPRAPTKEEMSLRAYTARCMLNRLRRAACRLFTSEKMVKAIKKLEIEIEARRLVVRKDRHLWKDVGERQKVLNWLLSYNPLWLRIGLETVYGELISLEDNSDVTGLAVFILSRLLWNPDIAAEYRHPTVPHLYGDGHEEALSKFTLKKLLLLVCFLDYAKISRLIDHDPCLFCKDAEFKASKEILLAFSRDFLSGEGDLSRHLGLLGLPVNHVQTPFDEFDFAVTNLAVDLQCGVRLVRTMELLTQNWDLSKKLRIPAISRLQKMHNVDIVLQVLKSRGIELSDEHGNTILSKNIVDRHREKTLGLLWKIVFAFQVNISLNLDQLKEEIAFLKHTKSIKKTVSLLSCHSDALTNKKKGKRDSGSFEQYGENIKLLMDWVNAVCAFYNKKVENFTVSFSDGRVLCYLIHHYHPCYVPFDAISQRTTQTVECTHTGSVVLNSSSESDESSLDMSLKAFDQENTSELYKELLENEKKNFHLVRSAVRDLGGIPAMINHSDMSNTIPDEKVVITYLSFLCARLLDLRKEIRAARLIQTTWRKYKLKTDLKRHQERDKAARIIQSAVINFLRKQRLRKTLNAALIIQKYWRRVLAQKKLLMLKKEKLERVQNKAASLIQGYWRRYSTRKRFLKLKYYSIVLQSRIRMIIAVTCYKRYLWATVTIQRHWRASLRRKQDQQRYEKLKSSSLIIQAMFRRWKQRKMQLQVKATITLQRAFREWHLRKRAKEEKSAIVIQSWYRMHKQLRKYVYVRSCVVIIQKRFRCFQAQKLYKRRKESILTIQKYYRAYLKGKIERTNYLQKRAAAIQLQAAFRRLKAHNLHRQIRAACVIQSYWRMRQDRVRFLNLKKIIIKLQAHVRKHQQLRKYKKMKKAAVIIQTHFQAYIFARKVLASYQKTRSAVIVLQSAYRGMQARKMYIHILTSVIKIQSYYRAYVSKKEFLSLKNATIKLQSIVRMKQTRKQYLHLRATALFIQQCYHSKKLAAQKREEYMQMRESCIKLQAFVRGYLVRKQMRLQRKAVISLQSYFRMRKSRQYYLKMYKAVIIIQNYYHSYKAQVNQRKNFLQVKKAATCLQAAYRGYKVRQLIKQQSVAAVKIQSAFRGYSKRVKYQSVLQSIIKIQRWYRAYKTLHGIRTHFLKTKAAVISLQSAYRGWKVRKQIRREHQAAMKIQSAFRMAKAQKQFRLFKTAALVIQQHLRAWTAGRKQRMEYIELRHSVLMLQSMWKGKALRRQLQRQHKCAVIIQSYYRMHVQQKKWKIMKKAALLIQKYYRAYSIGREQHCLYLKTKAAVVTLQSAYRGMKVRKRIKDCNKAAITIQSKYRAYKTKKKYAAYRASAIIIQRWYRSIKITNHQYKEYLNLKKTAIKIQAVYRGIRVRRHIQCMHRAATFIKAMFKMHQSRIRYHTMRKATIVIQVRYRAYYQGKMQREDYLKFLKAVNVLQANFRGVRVRRTLRKLQIAATVIQSNYRRYRQQTYFNKLKKITKTVQQRYRAVKERNIQFQRYNKLRHSVIHIQAIFRGMKVRRHLKTMHIAATLIQRRFRTLMMRRRFLSLKKTAIWIQRKYRAHLCTKHHLQFLRLQNAAIKIQSSYRRWVVRKKMREMHRAATFIQATFRMHRVHMRYQALKQASVVIQQQYQANRAAKLQRQHYLRQRHSAVILQAAFRGMETRRRLKSMHSSAILIQSRFRSLLVRRRFISLKKAAIFIQRKYRATICAKHNLHQFLQLRKAAVTIQSSYRRLMVKKKLQEMHRAAVLIQATFRMHKTYITFQTWKHASILIQQHYRTYRASKLQRENYTKQWHSALIIQAAYRGMKARQLLREKRKAAIIIQSTYRMYRQYCLYQNLQWATKIIQEKYRANKKKHKALQHNELKKAEACVQASFQDMNIKKLIQEQHQTSLTIQKHCNAFKIKKQYLHLRAPVVSIQRRYRKLTAVHTQAVICIQSYYRGFKVRRDIQNMHLAATRIQSLYRMHRAKVDYQTKKTAIVVIQNYYRLYVRVKTERNSFLAVQKSVRTIQAAFRSMKVRQKLKNLSQEKMAAIVSPSAVYCYRIEAQSEAVGSEGVIIQEWYKTSCLAHSQEAEYHSQSRAAVTIQKAFRRMITRKLETQKCAALRIQFFLQMAVYRRRFVQQKRAAVTLQHYFRTWQTRKQFLLYRKAAVVLQNHYRAFLSAKHQRQVYLQIRSSVIIIQARTKGFIQKRKFQKIKNSTIKIQAVWRRYRDKKSLCKVKAACKIQAWYRCWRAHKEYLAILKAVKIIQGSFYXKLERTRFLNMRASAIIIQRKWRAILSAKIAHEHFLMIQRHQAACLIQAHFRGYKGRQVFLRQKSAALNIQKYIRAREAGRRERIKYIELKKSTVTLQALVRGWLVRKRILEQRAKIRLLHFTAAAYYHLKALRIQRAYKLYLALKNANKQVNSAICIQRWFRARLQQKRFIQICHSIKKIEHEGQERLSQQNRAASVIQKAVRHFLLRKKQEKFTSGIIKFQALWRGYSWRKNNDCTKIKAIRLSLQVVNREIREENKLYRRAALALHYLLTYKHLSAILEAVKHLEVVTRLSPFCCENMAQSGAISKIFVLIRSCNRSVPCMEVIRYAVQVLLNVAKYEKTTSAVYDVENCVDTLLELLQMYREKPGNKVADKSGSIFTKTCCLLATLLKTTNRASDVRSRSKVVDRIYSLYKLTAYKHKVNTERLHYKQKKDSSTSIPFIPETPVRTRIVSRLKPDWVLRRDNLEEITNPLQAIQMVMDTLGIPY.

Serine 279, serine 282, serine 366, serine 391, and serine 419 each carry phosphoserine. Residues 469 to 488 (VKDISSHSHNKQPKRRPILS) are disordered. Positions 476–485 (SHNKQPKRRP) are enriched in basic residues. Serine 599 carries the post-translational modification Phosphoserine. The 137-residue stretch at 911–1047 (KASKEILLAF…LLWKIVFAFQ (137 aa)) folds into the Calponin-homology (CH) 1 domain. Residues 1048 to 1069 (VNISLNLDQLKEEIAFLKHTKS) adopt a coiled-coil conformation. At serine 1094 the chain carries Phosphoserine. The Calponin-homology (CH) 2 domain maps to 1101 to 1252 (GENIKLLMDW…YLSFLCARLL (152 aa)). IQ domains are found at residues 1338–1369 (QNKA…IVLQ), 1384–1413 (YLWA…KLKS), 1573–1604 (LKKI…VIIQ), 1623–1652 (TRSA…SVIK), 1646–1675 (ILTS…ATIK), 1669–1700 (LKNA…LFIQ), 1719–1748 (MRES…AVIS), 1742–1773 (QRKA…IIIQ), 1792–1821 (VKKA…AAVK), 1815–1844 (QSVA…SIIK), 1865–1894 (TKAA…AAMK), 1888–1919 (EHQA…LVIQ), 1938–1969 (LRHS…VIIQ), 1961–1992 (QHKC…LLIQ), 2011–2040 (TKAA…AAIT), 2034–2065 (CNKA…IIIQ), 2084–2115 (LKKT…TFIK), 2107–2138 (MHRA…IVIQ), 2157–2188 (FLKA…TVIQ), 2180–2209 (LQIA…ITKT), 2230–2261 (LRHS…TLIQ), 2253–2284 (MHIA…IWIQ), 2302–2333 (LQNA…TFIQ), 2325–2356 (MHRA…VVIQ), 2375–2406 (QRHS…ILIQ), 2398–2429 (MHSS…IFIQ), 2448–2479 (LRKA…VLIQ), 2521–2552 (QWHS…IIIQ), 2657–2686 (HTQA…AATR), 2680–2711 (MHLA…VVIQ), 2730–2759 (VQKS…EKMA), 2806–2837 (QSRA…RIQF), 2851–2882 (QKRA…VVLQ), 2901–2930 (IRSS…STIK), 2946–2977 (KVKA…KIIQ), 3021–3050 (RHQA…AALN), 3071–3102 (LKKS…RLLH), and 3173–3202 (QNRA…GIIK).

The protein localises to the cytoplasm. It is found in the cytoskeleton. The protein resides in the spindle. It localises to the nucleus. Probable role in mitotic spindle regulation and coordination of mitotic processes. May have a preferential role in regulating neurogenesis. This chain is Abnormal spindle-like microcephaly-associated protein homolog (ASPM), found in Saimiri boliviensis boliviensis (Bolivian squirrel monkey).